The chain runs to 473 residues: Glutamate--tRNA ligase 1 (473 aa).

The 'HIGH' region signature appears at 11–21; it reads PSPTGYLHIGG. Basic and acidic residues predominate over residues 113–133; sequence KARAEGRPPRYDGRWRDRDPS. Positions 113–136 are disordered; sequence KARAEGRPPRYDGRWRDRDPSEAP. Positions 240 to 244 match the 'KMSKS' region motif; it reads KLSKR. K243 is a binding site for ATP.

It belongs to the class-I aminoacyl-tRNA synthetase family. Glutamate--tRNA ligase type 1 subfamily. In terms of assembly, monomer.

It is found in the cytoplasm. The catalysed reaction is tRNA(Glu) + L-glutamate + ATP = L-glutamyl-tRNA(Glu) + AMP + diphosphate. In terms of biological role, catalyzes the attachment of glutamate to tRNA(Glu) in a two-step reaction: glutamate is first activated by ATP to form Glu-AMP and then transferred to the acceptor end of tRNA(Glu). The chain is Glutamate--tRNA ligase 1 from Brucella melitensis biotype 1 (strain ATCC 23456 / CCUG 17765 / NCTC 10094 / 16M).